Consider the following 530-residue polypeptide: Methionine--tRNA ligase (530 aa).

Residues 18-28 (YYVNDVPHIGS) carry the 'HIGH' region motif. Zn(2+) contacts are provided by Cys133, Cys136, Cys151, and His154. The 'KMSKS' region motif lies at 307 to 311 (KMGKS). Lys310 lines the ATP pocket.

This sequence belongs to the class-I aminoacyl-tRNA synthetase family. MetG type 2A subfamily. As to quaternary structure, monomer. The cofactor is Zn(2+).

It localises to the cytoplasm. The catalysed reaction is tRNA(Met) + L-methionine + ATP = L-methionyl-tRNA(Met) + AMP + diphosphate. Is required not only for elongation of protein synthesis but also for the initiation of all mRNA translation through initiator tRNA(fMet) aminoacylation. This is Methionine--tRNA ligase from Nostoc sp. (strain PCC 7120 / SAG 25.82 / UTEX 2576).